We begin with the raw amino-acid sequence, 858 residues long: Bifunctional uridylyltransferase/uridylyl-removing enzyme (858 aa).

The segment at 1–324 (MSASVAEPPP…PATSGVTRVL (324 aa)) is uridylyltransferase. Residues 325 to 681 (SPGRFVEKQG…ARPSPVGDAL (357 aa)) form a uridylyl-removing region. The HD domain occupies 443 to 565 (VDQHILMVLR…VGSERRLTAL (123 aa)). 2 ACT domains span residues 682–761 (QVLV…PEPS) and 790–858 (ILSV…AIAV).

This sequence belongs to the GlnD family. Mg(2+) serves as cofactor.

It carries out the reaction [protein-PII]-L-tyrosine + UTP = [protein-PII]-uridylyl-L-tyrosine + diphosphate. The enzyme catalyses [protein-PII]-uridylyl-L-tyrosine + H2O = [protein-PII]-L-tyrosine + UMP + H(+). With respect to regulation, uridylyltransferase (UTase) activity is inhibited by glutamine, while glutamine activates uridylyl-removing (UR) activity. Functionally, modifies, by uridylylation and deuridylylation, the PII regulatory proteins (GlnB and homologs), in response to the nitrogen status of the cell that GlnD senses through the glutamine level. Under low glutamine levels, catalyzes the conversion of the PII proteins and UTP to PII-UMP and PPi, while under higher glutamine levels, GlnD hydrolyzes PII-UMP to PII and UMP (deuridylylation). Thus, controls uridylylation state and activity of the PII proteins, and plays an important role in the regulation of nitrogen assimilation and metabolism. The polypeptide is Bifunctional uridylyltransferase/uridylyl-removing enzyme (Burkholderia pseudomallei (strain 1106a)).